The chain runs to 481 residues: Glutamyl-tRNA(Gln) amidotransferase subunit A (481 aa).

Active-site charge relay system residues include Lys-76 and Ser-151. The Acyl-ester intermediate role is filled by Ser-175.

It belongs to the amidase family. GatA subfamily. In terms of assembly, heterotrimer of A, B and C subunits.

The enzyme catalyses L-glutamyl-tRNA(Gln) + L-glutamine + ATP + H2O = L-glutaminyl-tRNA(Gln) + L-glutamate + ADP + phosphate + H(+). In terms of biological role, allows the formation of correctly charged Gln-tRNA(Gln) through the transamidation of misacylated Glu-tRNA(Gln) in organisms which lack glutaminyl-tRNA synthetase. The reaction takes place in the presence of glutamine and ATP through an activated gamma-phospho-Glu-tRNA(Gln). The chain is Glutamyl-tRNA(Gln) amidotransferase subunit A from Chlorobaculum tepidum (strain ATCC 49652 / DSM 12025 / NBRC 103806 / TLS) (Chlorobium tepidum).